The following is a 497-amino-acid chain: Probable malate:quinone oxidoreductase (497 aa).

Belongs to the MQO family. FAD is required as a cofactor.

It catalyses the reaction (S)-malate + a quinone = a quinol + oxaloacetate. The protein operates within carbohydrate metabolism; tricarboxylic acid cycle; oxaloacetate from (S)-malate (quinone route): step 1/1. This chain is Probable malate:quinone oxidoreductase, found in Tolumonas auensis (strain DSM 9187 / NBRC 110442 / TA 4).